Here is a 1101-residue protein sequence, read N- to C-terminus: Type VI secretion system component TssM1 (1101 aa).

The chain crosses the membrane as a helical span at residues 371-391 (LTIGALSATALVVLAVTAVWI).

The protein localises to the cell inner membrane. Core component of the type VI (T6SS) secretion system that plays a role in the release of toxins targeting both eukaryotic and prokaryotic species. Plays an essential role in stabilization of assembled TssK1 structure at a fixed perimembrane site. The polypeptide is Type VI secretion system component TssM1 (Pseudomonas aeruginosa (strain ATCC 15692 / DSM 22644 / CIP 104116 / JCM 14847 / LMG 12228 / 1C / PRS 101 / PAO1)).